The following is a 138-amino-acid chain: Molluscan insulin-related peptide 5 (138 aa).

The signal sequence occupies residues 1–31 (MAGVRLVFTKAFMVTVLLTLLLNIGVKPAEG). Gln-32 carries the pyrrolidone carboxylic acid modification. 3 disulfide bridges follow: Cys-48-Cys-124, Cys-60-Cys-137, and Cys-123-Cys-128. A propeptide spans 72 to 84 (DAETGWLLPETMV) (C-beta peptide like). Positions 87-111 (NAQTDLDDPLRNIKLSSESALTYLT) are cleaved as a propeptide — C-alpha peptide like. Pyrrolidone carboxylic acid is present on Gln-114.

The protein belongs to the insulin family. In terms of assembly, heterodimer of a B chain and an A chain linked by two disulfide bonds. In terms of tissue distribution, expressed in the cerebral light-green cells which are giant neuroendocrines cells involved in the control of growth.

The protein resides in the cytoplasmic vesicle. It is found in the secretory vesicle. This Lymnaea stagnalis (Great pond snail) protein is Molluscan insulin-related peptide 5.